The following is a 191-amino-acid chain: Thymidine kinase (191 aa).

Residues 9-16 (GSMNSGKT) and 85-88 (DESQ) each bind ATP. E86 acts as the Proton acceptor in catalysis. Zn(2+) is bound by residues C143, C146, C181, and C184.

Belongs to the thymidine kinase family. Homotetramer.

It localises to the cytoplasm. It carries out the reaction thymidine + ATP = dTMP + ADP + H(+). The polypeptide is Thymidine kinase (Listeria innocua serovar 6a (strain ATCC BAA-680 / CLIP 11262)).